The sequence spans 359 residues: 5-amino-6-(D-ribitylamino)uracil--L-tyrosine 4-hydroxyphenyl transferase (359 aa).

In terms of domain architecture, Radical SAM core spans 45–282; the sequence is VTYVLNANIN…VYAISRIFFK (238 aa). [4Fe-4S] cluster is bound by residues C59, C63, and C66.

This sequence belongs to the radical SAM superfamily. CofH family. As to quaternary structure, consists of two subunits, CofG and CofH. Requires [4Fe-4S] cluster as cofactor.

The catalysed reaction is 5-amino-6-(D-ribitylamino)uracil + L-tyrosine + S-adenosyl-L-methionine = 5-amino-5-(4-hydroxybenzyl)-6-(D-ribitylimino)-5,6-dihydrouracil + 2-iminoacetate + 5'-deoxyadenosine + L-methionine + H(+). It participates in cofactor biosynthesis; coenzyme F0 biosynthesis. Its function is as follows. Catalyzes the radical-mediated synthesis of 5-amino-5-(4-hydroxybenzyl)-6-(D-ribitylimino)-5,6-dihydrouracil from 5-amino-6-(D-ribitylamino)uracil and L-tyrosine. This chain is 5-amino-6-(D-ribitylamino)uracil--L-tyrosine 4-hydroxyphenyl transferase, found in Methanococcus vannielii (strain ATCC 35089 / DSM 1224 / JCM 13029 / OCM 148 / SB).